Here is a 245-residue protein sequence, read N- to C-terminus: 8-amino-3,8-dideoxy-manno-octulosonate cytidylyltransferase (245 aa).

The protein belongs to the KdsB family.

The protein resides in the cytoplasm. It carries out the reaction 8-amino-3,8-dideoxy-alpha-D-manno-octulosonate + CTP = CMP-8-amino-3,8-dideoxy-alpha-D-manno-oct-2-ulosonate + diphosphate. It functions in the pathway bacterial outer membrane biogenesis; lipopolysaccharide biosynthesis. Functionally, activates KDO8N (a required 8-carbon sugar) for incorporation into bacterial lipopolysaccharide in the Shewanella genus. In Shewanella putrefaciens (strain CN-32 / ATCC BAA-453), this protein is 8-amino-3,8-dideoxy-manno-octulosonate cytidylyltransferase.